The primary structure comprises 197 residues: Phospholipid hydroperoxide glutathione peroxidase (197 aa).

Position 40 is a phosphoserine (S40). U73 is an active-site residue. Residue U73 is a non-standard amino acid, selenocysteine. V78 bears the Phosphoserine mark.

Belongs to the glutathione peroxidase family. Monomer. Has a tendency to form higher mass oligomers. Interacts with FUNDC1; this interaction promotes GPX4 recruitment into mitochondria through TOM/TIM complex where it is degraded by mitophagy. In terms of tissue distribution, present primarily in testis. Expressed in flagella of epididymal sperm. Isoform Cytoplasmic: Highly expressed in testis. Present in spermatogonia, spermatocyte and spermatid (at protein level).

It is found in the nucleus. It localises to the nucleolus. Its subcellular location is the mitochondrion. The protein localises to the cytoplasm. It carries out the reaction a hydroperoxy polyunsaturated fatty acid + 2 glutathione = a hydroxy polyunsaturated fatty acid + glutathione disulfide + H2O. The enzyme catalyses 2 glutathione + H2O2 = glutathione disulfide + 2 H2O. It catalyses the reaction tert-butyl hydroperoxide + 2 glutathione = tert-butanol + glutathione disulfide + H2O. The catalysed reaction is cumene hydroperoxide + 2 glutathione = 2-phenylpropan-2-ol + glutathione disulfide + H2O. It carries out the reaction (9S)-hydroperoxy-(10E,12Z)-octadecadienoate + 2 glutathione = (9S)-hydroxy-(10E,12Z)-octadecadienoate + glutathione disulfide + H2O. The enzyme catalyses (13S)-hydroperoxy-(9Z,11E)-octadecadienoate + 2 glutathione = (13S)-hydroxy-(9Z,11E)-octadecadienoate + glutathione disulfide + H2O. It catalyses the reaction (5S)-hydroperoxy-(6E,8Z,11Z,14Z)-eicosatetraenoate + 2 glutathione = (5S)-hydroxy-(6E,8Z,11Z,14Z)-eicosatetraenoate + glutathione disulfide + H2O. The catalysed reaction is (12R)-hydroperoxy-(5Z,8Z,10E,14Z)-eicosatetraenoate + 2 glutathione = (12R)-hydroxy-(5Z,8Z,10E,14Z)-eicosatetraenoate + glutathione disulfide + H2O. It carries out the reaction (12S)-hydroperoxy-(5Z,8Z,10E,14Z)-eicosatetraenoate + 2 glutathione = (12S)-hydroxy-(5Z,8Z,10E,14Z)-eicosatetraenoate + glutathione disulfide + H2O. The enzyme catalyses (15S)-hydroperoxy-(5Z,8Z,11Z,13E)-eicosatetraenoate + 2 glutathione = (15S)-hydroxy-(5Z,8Z,11Z,13E)-eicosatetraenoate + glutathione disulfide + H2O. It catalyses the reaction (5S)-hydroperoxy-(6E,8Z,11Z,14Z,17Z)-eicosapentaenoate + 2 glutathione = (5S)-hydroxy-(6E,8Z,11Z,14Z,17Z)-eicosapentaenoate + glutathione disulfide + H2O. The catalysed reaction is (12S)-hydroperoxy-(5Z,8Z,10E,14Z,17Z)-eicosapentaenoate + 2 glutathione = (12S)-hydroxy-(5Z,8Z,10E,14Z,17Z)-eicosapentaenoate + glutathione disulfide + H2O. It carries out the reaction (15S)-hydroperoxy-(5Z,8Z,11Z,13E,17Z)-eicosapentaenoate + 2 glutathione = (15S)-hydroxy-(5Z,8Z,11Z,13E,17Z)-eicosapentaenoate + glutathione disulfide + H2O. The enzyme catalyses (15S)-hydroperoxy-(11Z,13E)-eicosadienoate + 2 glutathione = (15S)-hydroxy-(11Z,13E)-eicosadienoate + glutathione disulfide + H2O. It catalyses the reaction (17S)-hydroperoxy-(4Z,7Z,10Z,13Z,15E,19Z)-docosahexaenoate + 2 glutathione = (17S)-hydroxy-(4Z,7Z,10Z,13Z,15E,19Z)-docosahexaenoate + glutathione disulfide + H2O. The catalysed reaction is a hydroperoxy-1,2-diacyl-glycero-3-phosphocholine + 2 glutathione = a hydroxy-1,2-diacyl-glycero-3-phosphocholine + glutathione disulfide + H2O. Essential antioxidant peroxidase that directly reduces phospholipid hydroperoxide even if they are incorporated in membranes and lipoproteins. Can also reduce fatty acid hydroperoxide, cholesterol hydroperoxide and thymine hydroperoxide. Plays a key role in protecting cells from oxidative damage by preventing membrane lipid peroxidation. Required to prevent cells from ferroptosis, a non-apoptotic cell death resulting from an iron-dependent accumulation of lipid reactive oxygen species. The presence of selenocysteine (Sec) versus Cys at the active site is essential for life: it provides resistance to overoxidation and prevents cells against ferroptosis. The presence of Sec at the active site is also essential for the survival of a specific type of parvalbumin-positive interneurons, thereby preventing against fatal epileptic seizures. May be required to protect cells from the toxicity of ingested lipid hydroperoxides. Required for normal sperm development and male fertility. Essential for maturation and survival of photoreceptor cells. Plays a role in a primary T-cell response to viral and parasitic infection by protecting T-cells from ferroptosis and by supporting T-cell expansion. Plays a role of glutathione peroxidase in platelets in the arachidonic acid metabolism. Reduces hydroperoxy ester lipids formed by a 15-lipoxygenase that may play a role as down-regulator of the cellular 15-lipoxygenase pathway. Can also reduce small soluble hydroperoxides such as H2O2, cumene hydroperoxide and tert-butyl hydroperoxide. Functionally, specifically able to suppress the production of leukotriene and prostaglandin in response to several stimuli by reducing fatty acid hydroperoxide. Its function is as follows. Specifically required to prevent mitochondrial cell death by mediating reduction of cardiolipin hydroperoxide. Also required for normal sperm development and male fertility. In terms of biological role, required for male fertility by stabilizing the condensed chromatin in sperm nuclei. In Rattus norvegicus (Rat), this protein is Phospholipid hydroperoxide glutathione peroxidase.